Consider the following 147-residue polypeptide: Large ribosomal subunit protein uL13 (147 aa).

The protein belongs to the universal ribosomal protein uL13 family. In terms of assembly, part of the 50S ribosomal subunit.

This protein is one of the early assembly proteins of the 50S ribosomal subunit, although it is not seen to bind rRNA by itself. It is important during the early stages of 50S assembly. The sequence is that of Large ribosomal subunit protein uL13 from Renibacterium salmoninarum (strain ATCC 33209 / DSM 20767 / JCM 11484 / NBRC 15589 / NCIMB 2235).